A 332-amino-acid polypeptide reads, in one-letter code: 5-dehydro-2-deoxygluconokinase 2 (332 aa).

Belongs to the carbohydrate kinase PfkB family.

It carries out the reaction 5-dehydro-2-deoxy-D-gluconate + ATP = 6-phospho-5-dehydro-2-deoxy-D-gluconate + ADP + H(+). The protein operates within polyol metabolism; myo-inositol degradation into acetyl-CoA; acetyl-CoA from myo-inositol: step 5/7. Functionally, catalyzes the phosphorylation of 5-dehydro-2-deoxy-D-gluconate (2-deoxy-5-keto-D-gluconate or DKG) to 6-phospho-5-dehydro-2-deoxy-D-gluconate (DKGP). In Bacillus cereus (strain ZK / E33L), this protein is 5-dehydro-2-deoxygluconokinase 2.